A 100-amino-acid chain; its full sequence is Aspartyl/glutamyl-tRNA(Asn/Gln) amidotransferase subunit C (100 aa).

It belongs to the GatC family. Heterotrimer of A, B and C subunits.

The catalysed reaction is L-glutamyl-tRNA(Gln) + L-glutamine + ATP + H2O = L-glutaminyl-tRNA(Gln) + L-glutamate + ADP + phosphate + H(+). It catalyses the reaction L-aspartyl-tRNA(Asn) + L-glutamine + ATP + H2O = L-asparaginyl-tRNA(Asn) + L-glutamate + ADP + phosphate + 2 H(+). Allows the formation of correctly charged Asn-tRNA(Asn) or Gln-tRNA(Gln) through the transamidation of misacylated Asp-tRNA(Asn) or Glu-tRNA(Gln) in organisms which lack either or both of asparaginyl-tRNA or glutaminyl-tRNA synthetases. The reaction takes place in the presence of glutamine and ATP through an activated phospho-Asp-tRNA(Asn) or phospho-Glu-tRNA(Gln). This is Aspartyl/glutamyl-tRNA(Asn/Gln) amidotransferase subunit C from Streptococcus pneumoniae (strain Taiwan19F-14).